Consider the following 434-residue polypeptide: UDP-glucose 6-dehydrogenase (434 aa).

Residues 2-19 (NITF…GIIM), V11, D30, K35, T121, and E152 each bind NAD(+). Residues 148 to 152 (EFLRE), K204, N208, 249 to 253 (FLNAG), and G257 contribute to the substrate site. C260 (nucleophile) is an active-site residue. K263 serves as a coordination point for NAD(+). K321 is a substrate binding site. R328 is an NAD(+) binding site.

This sequence belongs to the UDP-glucose/GDP-mannose dehydrogenase family.

The catalysed reaction is UDP-alpha-D-glucose + 2 NAD(+) + H2O = UDP-alpha-D-glucuronate + 2 NADH + 3 H(+). It functions in the pathway nucleotide-sugar biosynthesis; UDP-alpha-D-glucuronate biosynthesis; UDP-alpha-D-glucuronate from UDP-alpha-D-glucose: step 1/1. This chain is UDP-glucose 6-dehydrogenase (udg), found in Rickettsia typhi (strain ATCC VR-144 / Wilmington).